The following is a 659-amino-acid chain: Envelope glycoprotein (659 aa).

The N-terminal stretch at Met-1 to Met-35 is a signal peptide. Residues Asn-36 to Leu-606 are Extracellular-facing. Disulfide bonds link Cys-141/Cys-162 and Cys-154/Cys-167. Residues Leu-278–Thr-301 are disordered. The N-linked (GlcNAc...) asparagine; by host glycan is linked to Asn-318. Cystine bridges form between Cys-328–Cys-331, Cys-328–Cys-558, and Cys-550–Cys-557. The short motif at Cys-328–Cys-331 is the CXXC element. N-linked (GlcNAc...) asparagine; by host glycosylation is found at Asn-389, Asn-395, Asn-407, and Asn-427. The interval Val-466–Ser-486 is fusion peptide. Residues Ala-506 to Val-532 are a coiled coil. The immunosuppression stretch occupies residues Leu-533–Leu-549. The short motif at Cys-550–Cys-558 is the CX6CC element. Positions Val-567 to Lys-587 form a coiled coil. A helical membrane pass occupies residues Ser-607–Ile-627. Cys-625 carries S-palmitoyl cysteine; by host lipidation. Residues Asn-628–Leu-659 are Cytoplasmic-facing. Positions Tyr-650 to Leu-653 match the YXXL motif; contains endocytosis signal motif.

As to quaternary structure, the mature envelope protein (Env) consists of a trimer of SU-TM heterodimers attached by a labile interchain disulfide bond. Post-translationally, specific enzymatic cleavages in vivo yield mature proteins. Envelope glycoproteins are synthesized as an inactive precursor that is N-glycosylated and processed likely by host cell furin or by a furin-like protease in the Golgi to yield the mature SU and TM proteins. The cleavage site between SU and TM requires the minimal sequence [KR]-X-[KR]-R. The R-peptide is released from the C-terminus of the cytoplasmic tail of the TM protein upon particle formation as a result of proteolytic cleavage by the viral protease. Cleavage of this peptide is required for TM to become fusogenic. The CXXC motif is highly conserved across a broad range of retroviral envelope proteins. It is thought to participate in the formation of a labile disulfide bond possibly with the CX6CC motif present in the transmembrane protein. Isomerization of the intersubunit disulfide bond to an SU intrachain disulfide bond is thought to occur upon receptor recognition in order to allow membrane fusion. In terms of processing, the transmembrane protein is palmitoylated. Post-translationally, the R-peptide is palmitoylated.

The protein resides in the virion membrane. The protein localises to the host cell membrane. In terms of biological role, the surface protein (SU) attaches the virus to the host cell by binding to its receptor. This interaction triggers the refolding of the transmembrane protein (TM) and is thought to activate its fusogenic potential by unmasking its fusion peptide. Fusion occurs at the host cell plasma membrane. Functionally, the transmembrane protein (TM) acts as a class I viral fusion protein. Under the current model, the protein has at least 3 conformational states: pre-fusion native state, pre-hairpin intermediate state, and post-fusion hairpin state. During viral and target cell membrane fusion, the coiled coil regions (heptad repeats) assume a trimer-of-hairpins structure, positioning the fusion peptide in close proximity to the C-terminal region of the ectodomain. The formation of this structure appears to drive apposition and subsequent fusion of viral and target cell membranes. Membranes fusion leads to delivery of the nucleocapsid into the cytoplasm. This is Envelope glycoprotein (env) from Phascolarctos cinereus (Koala).